Reading from the N-terminus, the 201-residue chain is 3-isopropylmalate dehydratase small subunit (201 aa).

This sequence belongs to the LeuD family. LeuD type 1 subfamily. As to quaternary structure, heterodimer of LeuC and LeuD.

It catalyses the reaction (2R,3S)-3-isopropylmalate = (2S)-2-isopropylmalate. Its pathway is amino-acid biosynthesis; L-leucine biosynthesis; L-leucine from 3-methyl-2-oxobutanoate: step 2/4. Catalyzes the isomerization between 2-isopropylmalate and 3-isopropylmalate, via the formation of 2-isopropylmaleate. The protein is 3-isopropylmalate dehydratase small subunit of Shewanella sp. (strain ANA-3).